Here is a 187-residue protein sequence, read N- to C-terminus: Threonylcarbamoyl-AMP synthase (187 aa).

The YrdC-like domain occupies 3–187 (QVTPSQISGI…IQTGHIFRQG (185 aa)).

The protein belongs to the SUA5 family. TsaC subfamily.

It is found in the cytoplasm. It carries out the reaction L-threonine + hydrogencarbonate + ATP = L-threonylcarbamoyladenylate + diphosphate + H2O. Its function is as follows. Required for the formation of a threonylcarbamoyl group on adenosine at position 37 (t(6)A37) in tRNAs that read codons beginning with adenine. Catalyzes the conversion of L-threonine, HCO(3)(-)/CO(2) and ATP to give threonylcarbamoyl-AMP (TC-AMP) as the acyladenylate intermediate, with the release of diphosphate. This chain is Threonylcarbamoyl-AMP synthase, found in Shewanella amazonensis (strain ATCC BAA-1098 / SB2B).